We begin with the raw amino-acid sequence, 569 residues long: Urease subunit alpha (569 aa).

In terms of domain architecture, Urease spans 131 to 569 (GGIDTHIHFI…LPLAQRYLLL (439 aa)). 3 residues coordinate Ni(2+): His-136, His-138, and Lys-219. Residue Lys-219 is modified to N6-carboxylysine. Residue His-221 participates in substrate binding. Ni(2+) contacts are provided by His-248 and His-274. His-322 functions as the Proton donor in the catalytic mechanism. Asp-362 contributes to the Ni(2+) binding site.

This sequence belongs to the metallo-dependent hydrolases superfamily. Urease alpha subunit family. In terms of assembly, heterotrimer of UreA (gamma), UreB (beta) and UreC (alpha) subunits. Three heterotrimers associate to form the active enzyme. Requires Ni cation as cofactor. Carboxylation allows a single lysine to coordinate two nickel ions.

It localises to the cytoplasm. The enzyme catalyses urea + 2 H2O + H(+) = hydrogencarbonate + 2 NH4(+). The protein operates within nitrogen metabolism; urea degradation; CO(2) and NH(3) from urea (urease route): step 1/1. The protein is Urease subunit alpha of Synechococcus sp. (strain CC9605).